The sequence spans 110 residues: Protein mistic (110 aa).

The Cytoplasmic portion of the chain corresponds to 1 to 7; sequence MFCTFFE. The helical transmembrane segment at 8–22 threads the bilayer; sequence KHHRKWDILLEKSTG. Topologically, residues 23-31 are extracellular; the sequence is VMEAMKVTS. The helical transmembrane segment at 32–55 threads the bilayer; it reads EEKEQLSTAIDRMNEGLDAFIQLY. Residues 56 to 66 are Cytoplasmic-facing; sequence NESEIDEPLIQ. The helical transmembrane segment at 67-81 threads the bilayer; the sequence is LDDDTAELMKQARDM. The Extracellular segment spans residues 82–88; that stretch reads YGQEKLN. Residues 89–102 form a helical membrane-spanning segment; the sequence is EKLNTIIKQILSIS. Topologically, residues 103-110 are cytoplasmic; that stretch reads VSEEGEKE.

As to quaternary structure, monomer.

The protein localises to the cell membrane. Chaperone that facilitates the production and integration of integral membrane proteins into the bacterial lipid bilayer. This chain is Protein mistic (mstX), found in Bacillus subtilis (strain 168).